The chain runs to 307 residues: Major pollen allergen Lol p 5a (307 aa).

A signal peptide spans 1–25 (MAVQKYTVALFLAVALVAGPAASYA).

Belongs to the Poa p IX/Phl p VI allergen family. In terms of tissue distribution, pollen, starch granules.

This chain is Major pollen allergen Lol p 5a (LOLPIB), found in Lolium perenne (Perennial ryegrass).